Here is a 350-residue protein sequence, read N- to C-terminus: Protein RecA (350 aa).

Position 67-74 (67-74 (GPESSGKT)) interacts with ATP.

It belongs to the RecA family.

It is found in the cytoplasm. In terms of biological role, can catalyze the hydrolysis of ATP in the presence of single-stranded DNA, the ATP-dependent uptake of single-stranded DNA by duplex DNA, and the ATP-dependent hybridization of homologous single-stranded DNAs. It interacts with LexA causing its activation and leading to its autocatalytic cleavage. In Chromobacterium violaceum (strain ATCC 12472 / DSM 30191 / JCM 1249 / CCUG 213 / NBRC 12614 / NCIMB 9131 / NCTC 9757 / MK), this protein is Protein RecA.